We begin with the raw amino-acid sequence, 246 residues long: Pyruvate formate-lyase 1-activating enzyme (246 aa).

The Radical SAM core domain occupies 16–239 (VDGPGIRFIT…MERVKGILEQ (224 aa)). Positions 30, 34, and 37 each coordinate [4Fe-4S] cluster. S-adenosyl-L-methionine is bound by residues 36 to 38 (YCH), Gly79, 130 to 132 (DLK), and His203.

The protein belongs to the organic radical-activating enzymes family. The cofactor is [4Fe-4S] cluster.

Its subcellular location is the cytoplasm. It catalyses the reaction glycyl-[formate C-acetyltransferase] + reduced [flavodoxin] + S-adenosyl-L-methionine = glycin-2-yl radical-[formate C-acetyltransferase] + semiquinone [flavodoxin] + 5'-deoxyadenosine + L-methionine + H(+). Activation of pyruvate formate-lyase 1 under anaerobic conditions by generation of an organic free radical, using S-adenosylmethionine and reduced flavodoxin as cosubstrates to produce 5'-deoxy-adenosine. In Escherichia coli O157:H7, this protein is Pyruvate formate-lyase 1-activating enzyme (pflA).